We begin with the raw amino-acid sequence, 311 residues long: Probable branched-chain-amino-acid aminotransferase (311 aa).

Residue Lys160 is modified to N6-(pyridoxal phosphate)lysine.

This sequence belongs to the class-IV pyridoxal-phosphate-dependent aminotransferase family. It depends on pyridoxal 5'-phosphate as a cofactor.

It carries out the reaction L-leucine + 2-oxoglutarate = 4-methyl-2-oxopentanoate + L-glutamate. It catalyses the reaction L-isoleucine + 2-oxoglutarate = (S)-3-methyl-2-oxopentanoate + L-glutamate. The enzyme catalyses L-valine + 2-oxoglutarate = 3-methyl-2-oxobutanoate + L-glutamate. Its pathway is amino-acid biosynthesis; L-isoleucine biosynthesis; L-isoleucine from 2-oxobutanoate: step 4/4. It participates in amino-acid biosynthesis; L-leucine biosynthesis; L-leucine from 3-methyl-2-oxobutanoate: step 4/4. The protein operates within amino-acid biosynthesis; L-valine biosynthesis; L-valine from pyruvate: step 4/4. Functionally, acts on leucine, isoleucine and valine. The polypeptide is Probable branched-chain-amino-acid aminotransferase (ilvE) (Aquifex aeolicus (strain VF5)).